The primary structure comprises 252 residues: Geranylgeranylglyceryl phosphate synthase (252 aa).

Positions 26 and 55 each coordinate Mg(2+). Residues 174-180 (YLEAGSG), 205-206 (GG), and 227-228 (GT) each bind sn-glycerol 1-phosphate.

Belongs to the GGGP/HepGP synthase family. Group II subfamily. Homotetramer. Homohexamer. Mg(2+) is required as a cofactor.

It localises to the cytoplasm. It carries out the reaction sn-glycerol 1-phosphate + (2E,6E,10E)-geranylgeranyl diphosphate = sn-3-O-(geranylgeranyl)glycerol 1-phosphate + diphosphate. The protein operates within membrane lipid metabolism; glycerophospholipid metabolism. Its function is as follows. Prenyltransferase that catalyzes the transfer of the geranylgeranyl moiety of geranylgeranyl diphosphate (GGPP) to the C3 hydroxyl of sn-glycerol-1-phosphate (G1P). This reaction is the first ether-bond-formation step in the biosynthesis of archaeal membrane lipids. This is Geranylgeranylglyceryl phosphate synthase from Thermococcus kodakarensis (strain ATCC BAA-918 / JCM 12380 / KOD1) (Pyrococcus kodakaraensis (strain KOD1)).